The primary structure comprises 427 residues: Serine--tRNA ligase (427 aa).

232-234 (TAE) contacts L-serine. Residue 263–265 (RSE) participates in ATP binding. Glutamate 286 is an L-serine binding site. 350 to 353 (EISS) provides a ligand contact to ATP. Serine 385 lines the L-serine pocket.

It belongs to the class-II aminoacyl-tRNA synthetase family. Type-1 seryl-tRNA synthetase subfamily. As to quaternary structure, homodimer. The tRNA molecule binds across the dimer.

Its subcellular location is the cytoplasm. It catalyses the reaction tRNA(Ser) + L-serine + ATP = L-seryl-tRNA(Ser) + AMP + diphosphate + H(+). It carries out the reaction tRNA(Sec) + L-serine + ATP = L-seryl-tRNA(Sec) + AMP + diphosphate + H(+). Its pathway is aminoacyl-tRNA biosynthesis; selenocysteinyl-tRNA(Sec) biosynthesis; L-seryl-tRNA(Sec) from L-serine and tRNA(Sec): step 1/1. Catalyzes the attachment of serine to tRNA(Ser). Is also able to aminoacylate tRNA(Sec) with serine, to form the misacylated tRNA L-seryl-tRNA(Sec), which will be further converted into selenocysteinyl-tRNA(Sec). The sequence is that of Serine--tRNA ligase from Lacticaseibacillus paracasei (strain ATCC 334 / BCRC 17002 / CCUG 31169 / CIP 107868 / KCTC 3260 / NRRL B-441) (Lactobacillus paracasei).